We begin with the raw amino-acid sequence, 295 residues long: uncharacterized protein (295 aa).

The first 19 residues, 1–19 (MHKLLLIITVFFTFNVAQA), serve as a signal peptide directing secretion.

This is an uncharacterized protein from Rickettsia prowazekii (strain Madrid E).